Reading from the N-terminus, the 649-residue chain is Glycerol-3-phosphate dehydrogenase, mitochondrial (649 aa).

An FAD-binding site is contributed by 69-97 (DVLIIGGGATGTGCALDAATRGLNVALVE).

It belongs to the FAD-dependent glycerol-3-phosphate dehydrogenase family. The cofactor is FAD.

It is found in the mitochondrion inner membrane. It localises to the mitochondrion intermembrane space. The enzyme catalyses a quinone + sn-glycerol 3-phosphate = dihydroxyacetone phosphate + a quinol. It participates in polyol metabolism; glycerol degradation via glycerol kinase pathway; glycerone phosphate from sn-glycerol 3-phosphate (anaerobic route): step 1/1. In Saccharomyces cerevisiae (strain ATCC 204508 / S288c) (Baker's yeast), this protein is Glycerol-3-phosphate dehydrogenase, mitochondrial (GUT2).